The sequence spans 71 residues: Small ribosomal subunit protein eS17 (71 aa).

It belongs to the eukaryotic ribosomal protein eS17 family.

The protein is Small ribosomal subunit protein eS17 of Pyrobaculum aerophilum (strain ATCC 51768 / DSM 7523 / JCM 9630 / CIP 104966 / NBRC 100827 / IM2).